Here is a 906-residue protein sequence, read N- to C-terminus: Alanine--tRNA ligase (906 aa).

Zn(2+) contacts are provided by histidine 600, histidine 604, cysteine 703, and histidine 707.

The protein belongs to the class-II aminoacyl-tRNA synthetase family. Homodimer. The cofactor is Zn(2+).

The protein localises to the cytoplasm. The enzyme catalyses tRNA(Ala) + L-alanine + ATP = L-alanyl-tRNA(Ala) + AMP + diphosphate. Catalyzes the attachment of alanine to tRNA(Ala) in a two-step reaction: alanine is first activated by ATP to form Ala-AMP and then transferred to the acceptor end of tRNA(Ala). Incorrectly charged aminoacyl-tRNA(Ala) is also edited in situ by the editing domain. The sequence is that of Alanine--tRNA ligase (alaS) from Archaeoglobus fulgidus (strain ATCC 49558 / DSM 4304 / JCM 9628 / NBRC 100126 / VC-16).